Reading from the N-terminus, the 1457-residue chain is ABC transporter G family member 36 (1457 aa).

A disordered region spans residues Arg14–Asp43. The span at Arg28–Arg39 shows a compositional bias: basic and acidic residues. One can recognise an ABC transporter 1 domain in the interval Gly164–Asp437. Gly197–Thr204 provides a ligand contact to ATP. The ABC transmembrane type-2 1 domain maps to Glu515 to Leu728. The next 7 membrane-spanning stretches (helical) occupy residues Phe533–Phe553, Ser565–Phe585, Ile621–Phe641, Leu653–Ala673, Ile677–Ile697, Trp706–Asn726, and Ile765–Leu785. A disordered region spans residues Ser821–Asp841. An ABC transporter 2 domain is found at Leu860 to Pro1112. Residue Gly905 to Thr912 participates in ATP binding. Residues Thr1185–Phe1399 enclose the ABC transmembrane type-2 2 domain. The next 7 membrane-spanning stretches (helical) occupy residues Phe1209–Lys1229, Tyr1244–Val1264, Ile1292–Phe1312, Phe1319–Met1339, Ile1349–Ile1369, Trp1380–Gly1400, and Trp1429–Ile1449.

It belongs to the ABC transporter superfamily. ABCG family. PDR (TC 3.A.1.205) subfamily.

The protein resides in the membrane. Functionally, may be a general defense protein. The sequence is that of ABC transporter G family member 36 from Oryza sativa subsp. indica (Rice).